A 284-amino-acid chain; its full sequence is 2-dehydro-3-deoxyphosphooctonate aldolase (284 aa).

The protein belongs to the KdsA family.

It is found in the cytoplasm. The catalysed reaction is D-arabinose 5-phosphate + phosphoenolpyruvate + H2O = 3-deoxy-alpha-D-manno-2-octulosonate-8-phosphate + phosphate. The protein operates within carbohydrate biosynthesis; 3-deoxy-D-manno-octulosonate biosynthesis; 3-deoxy-D-manno-octulosonate from D-ribulose 5-phosphate: step 2/3. It functions in the pathway bacterial outer membrane biogenesis; lipopolysaccharide biosynthesis. This Bordetella petrii (strain ATCC BAA-461 / DSM 12804 / CCUG 43448) protein is 2-dehydro-3-deoxyphosphooctonate aldolase.